A 188-amino-acid polypeptide reads, in one-letter code: MVNLNQSLGDLFKGIIPNVYVLGATIVSFLVLFLFITYFVYRPLKKYIKKRKDFLQNHIDLTIKSNVEAEKLEKKSQQKLLETKEFCIELKEKSQIEANKFLEDAKKTAIDNARQLINEGQKVLLEYENEIKSKYYMNVINVAVEICQKYLEKQDKNNKILQQSLIADLEKELRKRENSSKKKDNFGK.

Residues 19–39 (VYVLGATIVSFLVLFLFITYF) traverse the membrane as a helical segment.

The protein belongs to the ATPase B chain family. As to quaternary structure, F-type ATPases have 2 components, F(1) - the catalytic core - and F(0) - the membrane proton channel. F(1) has five subunits: alpha(3), beta(3), gamma(1), delta(1), epsilon(1). F(0) has three main subunits: a(1), b(2) and c(10-14). The alpha and beta chains form an alternating ring which encloses part of the gamma chain. F(1) is attached to F(0) by a central stalk formed by the gamma and epsilon chains, while a peripheral stalk is formed by the delta and b chains.

It is found in the cell membrane. F(1)F(0) ATP synthase produces ATP from ADP in the presence of a proton or sodium gradient. F-type ATPases consist of two structural domains, F(1) containing the extramembraneous catalytic core and F(0) containing the membrane proton channel, linked together by a central stalk and a peripheral stalk. During catalysis, ATP synthesis in the catalytic domain of F(1) is coupled via a rotary mechanism of the central stalk subunits to proton translocation. Functionally, component of the F(0) channel, it forms part of the peripheral stalk, linking F(1) to F(0). In Mesomycoplasma hyopneumoniae (strain 7448) (Mycoplasma hyopneumoniae), this protein is ATP synthase subunit b.